The sequence spans 197 residues: V-type ATP synthase subunit E 2 (197 aa).

It belongs to the V-ATPase E subunit family.

In terms of biological role, produces ATP from ADP in the presence of a proton gradient across the membrane. This is V-type ATP synthase subunit E 2 from Clostridium tetani (strain Massachusetts / E88).